The sequence spans 295 residues: Aquaporin-9 (295 aa).

The Cytoplasmic segment spans residues 1–24 (MQPEGAEKGKSFKQRLVLKSSLAK). Residues 25 to 43 (ETLSEFLGTFILIVLGCGC) form a helical membrane-spanning segment. The Extracellular portion of the chain corresponds to 44 to 57 (VAQAILSRGRFGGV). Residues 58 to 77 (ITINVGFSMAVAMAIYVAGG) form a helical membrane-spanning segment. At 78 to 79 (VS) the chain is on the cytoplasmic side. An intramembrane region (discontinuously helical) is located at residues 80–92 (GGHINPAVSLAMC). The NPA 1 signature appears at 84–86 (NPA). Over 93–98 (LFGRMK) the chain is Cytoplasmic. A helical membrane pass occupies residues 99 to 123 (WFKLPFYVGAQFLGAFVGAATVFGI). At 124-160 (YYDGLMSFAGGKLLIVGENATAHIFATYPAPYLSLAN) the chain is on the extracellular side. A helical membrane pass occupies residues 161 to 178 (AFADQVVATMILLIIVFA). Over 179-190 (IFDSRNLGAPRG) the chain is Cytoplasmic. Residues 191 to 207 (LEPIAIGLLIIVIASSL) form a helical membrane-spanning segment. Residues 208–210 (GLN) are Extracellular-facing. The discontinuously helical intramembrane region spans 211 to 225 (SGCAMNPARDLSPRL). The short motif at 216 to 218 (NPA) is the NPA 2 element. Residues 226–243 (FTALAGWGFEVFRAGNNF) are Extracellular-facing. Residues 244–264 (WWIPVVGPLVGAVIGGLIYVL) form a helical membrane-spanning segment. Topologically, residues 265–295 (VIEIHHPEPDSVFKTEQSEDKPEKYELSVIM) are cytoplasmic.

It belongs to the MIP/aquaporin (TC 1.A.8) family. Homotetramer; each monomer provides an independent glycerol/water pore. As to expression, highly expressed in peripheral leukocytes. Also expressed in liver, lung, and spleen.

It localises to the cell membrane. It is found in the basolateral cell membrane. The catalysed reaction is glycerol(in) = glycerol(out). It carries out the reaction H2O(in) = H2O(out). The enzyme catalyses urea(in) = urea(out). It catalyses the reaction (S)-lactate(in) = (S)-lactate(out). The catalysed reaction is NH4(+)(in) = NH4(+)(out). It carries out the reaction uracil(in) = uracil(out). The enzyme catalyses adenine(out) = adenine(in). It catalyses the reaction 3-hydroxybutanoate(in) = 3-hydroxybutanoate(out). The catalysed reaction is D-sorbitol(in) = D-sorbitol(out). It carries out the reaction D-mannitol(in) = D-mannitol(out). The enzyme catalyses H2O2(out) = H2O2(in). It catalyses the reaction arsenite(in) = arsenite(out). The catalysed reaction is selenite(in) = selenite(out). Aquaglyceroporins form homotetrameric transmembrane channels, with each monomer independently mediating glycerol and water transport across the plasma membrane along their osmotic gradient. AQP9 is the primary route for glycerol uptake in hepatocytes, supporting hepatic gluconeogenesis. It exhibits broad specificity and may transport various small, non-charged solutes, including carbamides, polyols, purines, and pyrimidines. AQP9 may also facilitate hepatic urea extrusion. Due to its permeability to lactate, AQP9 might participate in the astrocyte-to-neuron lactate shuttle, supplying neurons with energy. Additionally, AQP9 is permeable to arsenite, contributing to arsenic excretion by the liver and providing partial protection against arsenic toxicity. It is also permeable to H2O2 in vivo. Could also be permeable to ammonium. The sequence is that of Aquaporin-9 from Homo sapiens (Human).